The chain runs to 62 residues: Beta-defensin 110 (62 aa).

A signal peptide spans 1 to 21 (MKIHLFFFILLFWVTILPARS). 3 disulfides stabilise this stretch: cysteine 32-cysteine 60, cysteine 39-cysteine 53, and cysteine 43-cysteine 61.

The protein belongs to the beta-defensin family.

Its subcellular location is the secreted. In terms of biological role, has antibacterial activity. This chain is Beta-defensin 110 (DEFB110), found in Canis lupus familiaris (Dog).